Reading from the N-terminus, the 407-residue chain is UDP-N-acetyl-D-mannosamine dehydrogenase (407 aa).

This sequence belongs to the UDP-glucose/GDP-mannose dehydrogenase family.

The enzyme catalyses UDP-N-acetyl-alpha-D-mannosamine + 2 NAD(+) + H2O = UDP-N-acetyl-alpha-D-mannosaminouronate + 2 NADH + 3 H(+). It functions in the pathway capsule biogenesis; capsule polysaccharide biosynthesis. In terms of biological role, dehydrogenase involved in the biosynthesis of capsular polysaccharides. Catalyzes the NAD(+)-dependent oxidation of UDP-N-acetyl-D-mannosamine (UDP-ManNAc) to UDP-N-acetyl-D-mannosaminuronic acid (UDP-ManNAcA). This is UDP-N-acetyl-D-mannosamine dehydrogenase from Campylobacter jejuni.